The primary structure comprises 2130 residues: DNA polymerase zeta catalytic subunit (2130 aa).

Disordered regions lie at residues 528-635 (PAES…TGTL), 734-891 (GCEI…HDEA), 927-954 (FTPS…SNTP), and 1189-1243 (QAKD…SAAQ). Over residues 553–574 (TPIKSISSKSKSSPSKTPTTPI) the composition is skewed to low complexity. A compositionally biased stretch (polar residues) spans 620-629 (PRLSLQLDQG). Residues 735 to 753 (CEIERPHRSEGSALDELKP) show a composition bias toward basic and acidic residues. 3 stretches are compositionally biased toward polar residues: residues 771 to 786 (SEIQ…TSLD), 794 to 808 (LSQS…SMNG), and 818 to 835 (DSSS…SVSE). Residues 840–860 (LESKPKKSDETARSCDEKLQR) show a composition bias toward basic and acidic residues. Over residues 938 to 954 (TETTPQLSPKSNESNTP) the composition is skewed to polar residues. Positions 1228 to 1243 (PSSQSSEQSVSSSAAQ) are enriched in low complexity. Zn(2+) is bound by residues Cys2041, Cys2045, Cys2054, and Cys2057. 4 residues coordinate [4Fe-4S] cluster: Cys2086, Cys2089, Cys2098, and Cys2103. The CysB motif motif lies at 2086–2103 (CQACCGRLGSLQCDSLDC).

This sequence belongs to the DNA polymerase type-B family. As to quaternary structure, catalytic subunit of the zeta DNA polymerase complex, which consists of PolZ1/DNApol-zeta and the accessory component PolZ2/Rev7. Interacts with the apurinic/apyrimidinic (AP) endonuclease Rrp1; the interaction is likely indirect and mediated via PolZ2. [4Fe-4S] cluster serves as cofactor.

The enzyme catalyses DNA(n) + a 2'-deoxyribonucleoside 5'-triphosphate = DNA(n+1) + diphosphate. With respect to regulation, inhibited by tetracyclic diterpene antibiotic aphidicolin. In terms of biological role, as the catalytic subunit of the DNA polymerase zeta complex, plays a crucial role in translesion DNA synthesis (TLS) and various DNA repair mechanisms. Lacks an intrinsic 3'-5' exonuclease activity and thus has no proofreading function. During homologous recombination (HR) repair, has a overlapping role with the error-prone translesion polymerase eta to initiate repair synthesis which is completed by end joining or another polymerase that can bind and reinitiate synthesis. May participate in the Rrp1-dependent base excision repair (BER) pathway responsible for repair of DNA lesions that gives rise to apurinic/apyrimidinic (AP) sites. Unlike mammalian orthologs, it is not an error-prone polymerase. In Drosophila melanogaster (Fruit fly), this protein is DNA polymerase zeta catalytic subunit.